Reading from the N-terminus, the 364-residue chain is Transposase for insertion sequence element IS1111A (364 aa).

Belongs to the transposase IS1111A/IS1328/IS1533 family.

In terms of biological role, required for the transposition of the insertion element. The protein is Transposase for insertion sequence element IS1111A of Coxiella burnetii (strain RSA 493 / Nine Mile phase I).